The chain runs to 275 residues: MPQVTMRQMLEAGVHFGHQTRYWNPKMAPYIFGARGKIHIINLEKTVPLFNDAMNFLSSIAQKRGTVLFLGTKRSARESIKEEAERCNMPFMTQRWLGGTLTNFRTVKQSVARLKELEAAETDGTFEKLVKHEVLGLRREREKLDASLGGIKEMNRLPDAIFVIDIGHEDIAIKEAKKLGIPVIAVVDTNYDPALVDYAIPGNDDAIRAVQLYARAAADAVLEGKAAAPNSASVREEEFSAEAGDEGKGRRAPAKKATEKKADAPAAAPEAPAAE.

The segment at alanine 226–glutamate 275 is disordered. Over residues alanine 264 to glutamate 275 the composition is skewed to low complexity.

This sequence belongs to the universal ribosomal protein uS2 family.

This chain is Small ribosomal subunit protein uS2, found in Xanthomonas campestris pv. campestris (strain 8004).